We begin with the raw amino-acid sequence, 241 residues long: Carboxy-S-adenosyl-L-methionine synthase (241 aa).

S-adenosyl-L-methionine is bound by residues Tyr-38, 63–65, 88–89, 116–117, Asn-131, and Arg-198; these read GCS, DN, and DI.

Belongs to the class I-like SAM-binding methyltransferase superfamily. Cx-SAM synthase family. As to quaternary structure, homodimer.

The enzyme catalyses prephenate + S-adenosyl-L-methionine = carboxy-S-adenosyl-L-methionine + 3-phenylpyruvate + H2O. Catalyzes the conversion of S-adenosyl-L-methionine (SAM) to carboxy-S-adenosyl-L-methionine (Cx-SAM). The protein is Carboxy-S-adenosyl-L-methionine synthase of Pasteurella multocida (strain Pm70).